Consider the following 803-residue polypeptide: Subtilisin-like protease SBT5.5 (803 aa).

Positions 1-22 are cleaved as a signal peptide; that stretch reads MKRIFGIFIFLSLLLFLVPLLA. A propeptide spans 23-112 (activation peptide); sequence SCTKEKQVYI…KSDPRKYKIH (90 aa). Residues 30–108 form the Inhibitor I9 domain; it reads VYIVYFGEHK…VSVFKSDPRK (79 aa). The Peptidase S8 domain maps to 140–656; it reads KYDVNDRFRV…SRHFRPTKAA (517 aa). Aspartate 169 functions as the Charge relay system in the catalytic mechanism. A glycan (N-linked (GlcNAc...) asparagine) is linked at asparagine 202. Histidine 244 functions as the Charge relay system in the catalytic mechanism. Residues 409–504 form the PA domain; that stretch reads YAPLVYAPDV…VFSSTVDRIL (96 aa). Serine 589 (charge relay system) is an active-site residue. Asparagine 725 carries N-linked (GlcNAc...) asparagine glycosylation.

The protein belongs to the peptidase S8 family.

The protein localises to the secreted. The chain is Subtilisin-like protease SBT5.5 from Arabidopsis thaliana (Mouse-ear cress).